A 299-amino-acid polypeptide reads, in one-letter code: Probable alpha-L-glutamate ligase (299 aa).

Residues 112–294 (LQLLTEQGIA…IALQMIVHIE (183 aa)) form the ATP-grasp domain. ATP contacts are provided by residues lysine 148, 185–186 (DF), aspartate 194, and 218–220 (RAN). Residues aspartate 255, glutamate 267, and asparagine 269 each contribute to the Mg(2+) site. Mn(2+) contacts are provided by aspartate 255, glutamate 267, and asparagine 269.

It belongs to the RimK family. Requires Mg(2+) as cofactor. Mn(2+) serves as cofactor.

This is Probable alpha-L-glutamate ligase from Histophilus somni (strain 2336) (Haemophilus somnus).